The sequence spans 150 residues: Large ribosomal subunit protein bL9 (150 aa).

The protein belongs to the bacterial ribosomal protein bL9 family.

In terms of biological role, binds to the 23S rRNA. This Shewanella halifaxensis (strain HAW-EB4) protein is Large ribosomal subunit protein bL9.